The sequence spans 42 residues: Photosystem II reaction center protein J (42 aa).

A helical transmembrane segment spans residues 10–30; it reads IPLWLVGTVAGTAALTLVAVF.

The protein belongs to the PsbJ family. PSII is composed of 1 copy each of membrane proteins PsbA, PsbB, PsbC, PsbD, PsbE, PsbF, PsbH, PsbI, PsbJ, PsbK, PsbL, PsbM, PsbT, PsbX, PsbY, PsbZ, Psb30/Ycf12, at least 3 peripheral proteins of the oxygen-evolving complex and a large number of cofactors. It forms dimeric complexes.

The protein localises to the plastid. It is found in the chloroplast thylakoid membrane. Its function is as follows. One of the components of the core complex of photosystem II (PSII). PSII is a light-driven water:plastoquinone oxidoreductase that uses light energy to abstract electrons from H(2)O, generating O(2) and a proton gradient subsequently used for ATP formation. It consists of a core antenna complex that captures photons, and an electron transfer chain that converts photonic excitation into a charge separation. The chain is Photosystem II reaction center protein J from Chlorella vulgaris (Green alga).